A 466-amino-acid chain; its full sequence is Replicative helicase loading/DNA remodeling protein DnaB (466 aa).

The DDBH1 stretch occupies residues R3–Q113. Positions E200–E292 are DDBH2-1. The tract at residues V293–N401 is DDBH2-2.

The protein belongs to the DnaB/DnaD family. In terms of assembly, homotetramer, higher-order oligomers are induced by ssDNA. The DNA replisome assembles sequentially on oriC in this order; DnaA, DnaD, DnaB, DnaI-DnaC helicase. Part of the replication restart primosome, PriA binds first, then DnaD and subsequently DnaB bind.

Helps DnaI load the DnaC replicative helicase onto single-stranded (ss)DNA. During DNA replication from the origin of replication (oriC) in the DNA replisome, DnaB and DnaD are required after DnaA and before subsequent helicase DnaC loading. Component of the replication restart primosome, which reloads the replicative helicase on sites other than oriC. Essential for replication initiation of the chromosome and plasmids. Remodels DNA, laterally compacts supercoiled plasmid and linear DNA. Binds supercoiled, nicked and linear double-stranded (ds)DNA and phage phiX174 single-stranded (ss)DNA; phiX174 ssDNA is a better substrate than for B.subtilis. No binding to phage M13 ssDNA although it induces oligomers. The protein is Replicative helicase loading/DNA remodeling protein DnaB of Staphylococcus aureus (strain NCTC 8325 / PS 47).